A 284-amino-acid chain; its full sequence is Homeobox protein SIX1 (284 aa).

A DNA-binding region (homeobox) is located at residues G124 to E183. Residues V168–D269 form a disordered region. Residues D179–T190 show a composition bias toward basic and acidic residues. Residues R242–D269 show a composition bias toward polar residues.

Belongs to the SIX/Sine oculis homeobox family. Interacts with DACH1. Interacts with EYA1. Interacts with EYA2. Interacts with CDH1. Interacts with TBX18. Interacts with CEBPA. Interacts with CEBPB. Interacts with EBF2. In terms of processing, phosphorylated during interphase; becomes hyperphosphorylated during mitosis. Hyperphosphorylation impairs binding to promoter elements. Ubiquitinated by the anaphase promoting complex (APC), leading to its proteasomal degradation. Specifically expressed in skeletal muscle.

Its subcellular location is the nucleus. It localises to the cytoplasm. In terms of biological role, transcription factor that is involved in the regulation of cell proliferation, apoptosis and embryonic development. Plays an important role in the development of several organs, including kidney, muscle and inner ear. Depending on context, functions as a transcriptional repressor or activator. Lacks an activation domain, and requires interaction with EYA family members for transcription activation. Mediates nuclear translocation of EYA1 and EYA2. Binds the 5'-TCA[AG][AG]TTNC-3' motif present in the MEF3 element in the MYOG promoter and CIDEA enhancer. Regulates the expression of numerous genes, including MYC, CCND1 and EZR. Acts as an activator of the IGFBP5 promoter, probably coactivated by EYA2. Repression of precursor cell proliferation in myoblasts is switched to activation through recruitment of EYA3 to the SIX1-DACH1 complex. During myogenesis, seems to act together with EYA2 and DACH2. Regulates the expression of CCNA1. Promotes brown adipocyte differentiation. The polypeptide is Homeobox protein SIX1 (SIX1) (Homo sapiens (Human)).